The following is a 667-amino-acid chain: E3 ubiquitin-protein ligase Midline-1 (667 aa).

An RING-type zinc finger spans residues Cys-10–Arg-60. Ser-92 and Ser-96 each carry phosphoserine. B box-type zinc fingers lie at residues Lys-116 to Ile-165 and Gly-172 to Leu-212. The Zn(2+) site is built by Cys-119, Cys-122, Cys-134, Cys-137, Cys-142, Cys-145, His-150, His-159, Cys-175, His-178, Cys-198, and His-204. The stretch at Arg-205–Glu-264 forms a coiled coil. The 60-residue stretch at Leu-320–Leu-379 folds into the COS domain. The Fibronectin type-III domain occupies Ala-381–Gln-484. Polar residues predominate over residues Ser-471–Pro-485. The interval Ser-471–Ser-524 is disordered. A B30.2/SPRY domain is found at Asn-482–His-659. Residues Val-499–Glu-520 are compositionally biased toward basic and acidic residues. Ser-511 is subject to Phosphoserine.

Belongs to the TRIM/RBCC family. In terms of assembly, homodimer or heterodimer with MID2. Interacts with IGBP1. Interacts with TRIM16. Post-translationally, phosphorylated on serine and threonine residues. In the fetus, highest expression found in kidney, followed by brain and lung. Expressed at low levels in fetal liver. In the adult, most abundant in heart, placenta and brain.

The protein resides in the cytoplasm. The protein localises to the cytoskeleton. It localises to the spindle. It carries out the reaction S-ubiquitinyl-[E2 ubiquitin-conjugating enzyme]-L-cysteine + [acceptor protein]-L-lysine = [E2 ubiquitin-conjugating enzyme]-L-cysteine + N(6)-ubiquitinyl-[acceptor protein]-L-lysine.. In terms of biological role, has E3 ubiquitin ligase activity towards IGBP1, promoting its monoubiquitination, which results in deprotection of the catalytic subunit of protein phosphatase PP2A, and its subsequent degradation by polyubiquitination. In Homo sapiens (Human), this protein is E3 ubiquitin-protein ligase Midline-1 (MID1).